A 342-amino-acid chain; its full sequence is Alternative oxidase, mitochondrial (342 aa).

A mitochondrion-targeting transit peptide spans 1–20; it reads MIKTYQYRSILNSRNVGIRF. A helical transmembrane segment spans residues 135 to 155; sequence LTRCIFLESVAGVPGMVAAFI. Positions 142, 181, and 184 each coordinate Fe cation. Residues 200–220 form a helical membrane-spanning segment; that stretch reads FIIYMGQGVFANLFFLVYLIK. The Fe cation site is built by Glu232, Glu287, and His290. 2 stretches are compositionally biased toward basic and acidic residues: residues 308-321 and 330-342; these read PFAL…KEQQ and PHPE…QMRL. A disordered region spans residues 308–342; it reads PFALKVEDVPKEQQPDEYSLKTPHPEGWNREQMRL.

Belongs to the alternative oxidase family. As to quaternary structure, homodimer; disulfide-linked. Fe cation serves as cofactor.

It localises to the mitochondrion inner membrane. Its function is as follows. Catalyzes cyanide-resistant oxygen consumption. May increase respiration when the cytochrome respiratory pathway is restricted, or in response to low temperatures. The sequence is that of Alternative oxidase, mitochondrial (AOX1) from Wickerhamomyces anomalus (Yeast).